The sequence spans 410 residues: Translation initiation factor 2 subunit gamma (410 aa).

The tr-type G domain occupies 9 to 202 (QAEVNIGMVG…AIEEFIPTPE (194 aa)). The interval 18–25 (GHVDHGKT) is G1. Mg(2+)-binding residues include aspartate 21, threonine 25, glycine 46, and threonine 48. 21–26 (DHGKTT) provides a ligand contact to GTP. The G2 stretch occupies residues 46-50 (GITIK). Zn(2+) contacts are provided by cysteine 61, cysteine 64, cysteine 73, and cysteine 76. A G3 region spans residues 90–93 (DAPG). GTP is bound by residues 145-148 (NKIE) and 180-182 (SAL). The segment at 145 to 148 (NKIE) is G4. The segment at 180-182 (SAL) is G5.

The protein belongs to the TRAFAC class translation factor GTPase superfamily. Classic translation factor GTPase family. EIF2G subfamily. In terms of assembly, heterotrimer composed of an alpha, a beta and a gamma chain. Mg(2+) serves as cofactor.

It carries out the reaction GTP + H2O = GDP + phosphate + H(+). EIF-2 functions in the early steps of protein synthesis by forming a ternary complex with GTP and initiator tRNA. The chain is Translation initiation factor 2 subunit gamma from Thermococcus onnurineus (strain NA1).